We begin with the raw amino-acid sequence, 189 residues long: Leucine repeat adapter protein 25 (189 aa).

The residue at position 28 (S28) is a Phosphoserine. A disordered region spans residues L55–R81. A compositionally biased stretch (low complexity) spans A68–G79. One copy of the LRR repeat lies at L86–L114. The disordered stretch occupies residues D141–H174. Residues A159 to T169 are compositionally biased toward pro residues. S188 carries the phosphoserine modification.

The protein belongs to the FAM89 family. Interacts with SKI. Interacts (via LRR repeat) with CDC42BPA (via AGC-kinase C-terminal domain) and CDC42BPB (via AGC-kinase C-terminal domain). Interacts (via LRR repeat) with LIMK1 (via LIM zinc-binding domains). Forms a tripartite complex with CDC42BPA, CDC42BPB and LIMK1.

The protein localises to the cytoplasm. Its subcellular location is the cell projection. The protein resides in the lamellipodium. Its function is as follows. Negatively regulates TGF-beta-induced signaling; in cooperation with SKI prevents the translocation of SMAD2 from the nucleus to the cytoplasm in response to TGF-beta. Acts as an adapter that mediates the specific recognition of LIMK1 by CDC42BPA and CDC42BPB in the lamellipodia. LRAP25-mediated CDC42BPA/CDC42BPB targeting to LIMK1 and the lamellipodium results in LIMK1 activation and the subsequent phosphorylation of CFL1 which is important for lamellipodial F-actin regulation. In Rattus norvegicus (Rat), this protein is Leucine repeat adapter protein 25.